The primary structure comprises 129 residues: Transcriptional activator protein (129 aa).

The short motif at 13 to 28 (KAQHKIAKRRAVRRRR) is the Nuclear localization signal element. A zinc finger spans residues 33–50 (CGCSIFLHINCADNGFTH). Residues 73 to 109 (IFQDTTRRGPVVHQNQDLPHPSPVQPQPTESIGSPQS) form a disordered region. Ser-109 bears the Phosphoserine; by host mark. The interval 115 to 129 (SLDDFDESFWADIFK) is transactivation.

Belongs to the geminiviridae transcriptional activator protein family. As to quaternary structure, monomer. Homodimer. Homooligomer. Self-interaction correlates with nuclear localization and efficient activation of transcription. Monomers suppress local silencing by interacting with and inactivating host adenosine kinase 2 (ADK2) in the cytoplasm. Interacts with and inhibits host SNF1 kinase. Binds to ssDNA. Phosphorylated at Ser-109 by A.thaliana KIN10.

The protein resides in the host nucleus. It localises to the host cytoplasm. In terms of biological role, strong activator of the late viral genes promoters. Enhances the expression of the capsid protein and nuclear shuttle protein. Acts as a suppressor of RNA-mediated gene silencing, also known as post-transcriptional gene silencing (PTGS), a mechanism of plant viral defense that limits the accumulation of viral RNAs. Suppresses the host RNA silencing by inhibiting adenosine kinase 2 (ADK2), a kinase involved in a general methylation pathway. Also suppresses the host basal defense by interacting with and inhibiting SNF1 kinase, a key regulator of cell metabolism implicated in innate antiviral defense. Determines pathogenicity. The protein is Transcriptional activator protein of Cabbage leaf curl virus (isolate Jamaica) (CaLCuV).